Consider the following 1060-residue polypeptide: MPKRQDIHKILVIGSGPIIIGQAAEFDYSGTQACLALREEGYEVVLVNSNPATIMTDTEIADRVYIEPLTVEFVSQILRKELPDAILPTIGGQIGLNLAMKLSNTGILDELGIELLGTKLTAIDQAEDRELFKNLMQKLHEPVPESAIANNIEEAQQFADKIGFPVIIRPAFTMGGTGGGIANNEKELAEIAENGLNLSPVTQVLVERSIAGYKEVEFEVMRDAADSAIVVCNMENFDPVGVHTGDSMVFAPTQTLTDKEVQMLRDAALKIIRALKIEGGCNVQFALDRNSFKYYVIEVNPRVSRSSALASKATGYPIAKMAAKIAVGLHLDEIKNPVTKKTWAEFEPALDYVVTKLPRFPFDKFENGDRTLGTQMKATGEVMAIGRTLEESLLKAVRSLEVGLIHPERPAFAKLSDDELSKQIIQANDERLFYLAEAFRRDYTIEEVAELSKMNPFFLDKIKHIVELERELAAHKADLGLLAEVKRYGFADEEIAKLWGLHADQVRQMRKEQKILPVYKMVDTCAGEFASDTPYYYSTYESSTESVKSDKPSVLVIGSGPIRIGQGVEFDYATVHSVKAIQKAGYEAIIMNSNPETVSTDFSIADKLYFEPLTLEDVLNVIDLEQPEGVIVQFGGQTAINLAEPLANRGIKILGTSVEDLNRAEDRDLFDQVIKSLKLPQPEGGTATDKAGALAVADKIGYPVLVRPSYVLGGRAMEIVHDATELDNYIDRAVSVSHDHPVLIDHYLVGKECEVDCISDGDTVVLPGIMEHIERAGIHSGDSMAVYPPQTFSQDIIDQITDATIKLSRTLNCIGLMNVQFIIHAGKAYVIEVNPRASRTVPFLSKVTNIKLAQVATLAILGLSLKEQGFETGLLPNQSGIHVKSPVFSFSKLNHVDSLLGPEMKSTGEVMGSDTTLAKALYKAFEAAGMHLPQFGRALITVKDADKAEATALAKRFREVGYQLVATSGTAKAFEKTGITVSTIEKLDSGQETILEDIANRKIQLVINTMSADKKVSSDGFRIREAAIEHGVPLMTSLDTAGAILKVLELQAFSISPIKS.

The carboxyphosphate synthetic domain stretch occupies residues 1–401 (MPKRQDIHKI…SLLKAVRSLE (401 aa)). Positions 129, 169, 175, 176, 208, 210, 215, 241, 242, 243, 284, and 298 each coordinate ATP. An ATP-grasp 1 domain is found at 133-327 (KNLMQKLHEP…IAKMAAKIAV (195 aa)). The Mg(2+) site is built by Gln-284, Glu-298, and Asn-300. Positions 284, 298, and 300 each coordinate Mn(2+). The tract at residues 402–546 (VGLIHPERPA…YSTYESSTES (145 aa)) is oligomerization domain. The carbamoyl phosphate synthetic domain stretch occupies residues 547 to 929 (VKSDKPSVLV…ALYKAFEAAG (383 aa)). The 191-residue stretch at 671 to 861 (DQVIKSLKLP…LAQVATLAIL (191 aa)) folds into the ATP-grasp 2 domain. ATP contacts are provided by Arg-707, His-746, Leu-748, Glu-752, Gly-777, Ile-778, His-779, Ser-780, Gln-820, and Glu-832. Mg(2+) is bound by residues Gln-820, Glu-832, and Asn-834. Mn(2+) contacts are provided by Gln-820, Glu-832, and Asn-834. An MGS-like domain is found at 930-1060 (MHLPQFGRAL…QAFSISPIKS (131 aa)). The tract at residues 930–1060 (MHLPQFGRAL…QAFSISPIKS (131 aa)) is allosteric domain.

Belongs to the CarB family. As to quaternary structure, composed of two chains; the small (or glutamine) chain promotes the hydrolysis of glutamine to ammonia, which is used by the large (or ammonia) chain to synthesize carbamoyl phosphate. Tetramer of heterodimers (alpha,beta)4. The cofactor is Mg(2+). It depends on Mn(2+) as a cofactor.

The catalysed reaction is hydrogencarbonate + L-glutamine + 2 ATP + H2O = carbamoyl phosphate + L-glutamate + 2 ADP + phosphate + 2 H(+). The enzyme catalyses hydrogencarbonate + NH4(+) + 2 ATP = carbamoyl phosphate + 2 ADP + phosphate + 2 H(+). Its pathway is amino-acid biosynthesis; L-arginine biosynthesis; carbamoyl phosphate from bicarbonate: step 1/1. The protein operates within pyrimidine metabolism; UMP biosynthesis via de novo pathway; (S)-dihydroorotate from bicarbonate: step 1/3. In terms of biological role, large subunit of the glutamine-dependent carbamoyl phosphate synthetase (CPSase). CPSase catalyzes the formation of carbamoyl phosphate from the ammonia moiety of glutamine, carbonate, and phosphate donated by ATP, constituting the first step of 2 biosynthetic pathways, one leading to arginine and/or urea and the other to pyrimidine nucleotides. The large subunit (synthetase) binds the substrates ammonia (free or transferred from glutamine from the small subunit), hydrogencarbonate and ATP and carries out an ATP-coupled ligase reaction, activating hydrogencarbonate by forming carboxy phosphate which reacts with ammonia to form carbamoyl phosphate. This Lacticaseibacillus paracasei (strain ATCC 334 / BCRC 17002 / CCUG 31169 / CIP 107868 / KCTC 3260 / NRRL B-441) (Lactobacillus paracasei) protein is Carbamoyl phosphate synthase large chain.